The chain runs to 309 residues: Protein FdhE (309 aa).

The protein belongs to the FdhE family.

The protein localises to the cytoplasm. Functionally, necessary for formate dehydrogenase activity. This chain is Protein FdhE, found in Escherichia coli (strain K12 / MC4100 / BW2952).